Here is a 149-residue protein sequence, read N- to C-terminus: Large ribosomal subunit protein uL15 (149 aa).

The segment at 1–52 (MSELLKLHHLRPAPGSNKAKIRKGRGEASKGKTAGRGTKGTKARSTVPAGFE) is disordered.

The protein belongs to the universal ribosomal protein uL15 family. As to quaternary structure, part of the 50S ribosomal subunit.

In terms of biological role, binds to the 23S rRNA. This Thermobifida fusca (strain YX) protein is Large ribosomal subunit protein uL15.